Reading from the N-terminus, the 441-residue chain is Glutamate-1-semialdehyde 2,1-aminomutase (441 aa).

N6-(pyridoxal phosphate)lysine is present on Lys270.

The protein belongs to the class-III pyridoxal-phosphate-dependent aminotransferase family. HemL subfamily. Homodimer. Requires pyridoxal 5'-phosphate as cofactor.

The protein resides in the cytoplasm. The enzyme catalyses (S)-4-amino-5-oxopentanoate = 5-aminolevulinate. It functions in the pathway porphyrin-containing compound metabolism; protoporphyrin-IX biosynthesis; 5-aminolevulinate from L-glutamyl-tRNA(Glu): step 2/2. This Propionibacterium freudenreichii subsp. freudenreichii protein is Glutamate-1-semialdehyde 2,1-aminomutase (hemL).